The chain runs to 258 residues: GTP cyclohydrolase FolE2 (258 aa).

The protein belongs to the GTP cyclohydrolase IV family.

It carries out the reaction GTP + H2O = 7,8-dihydroneopterin 3'-triphosphate + formate + H(+). It functions in the pathway cofactor biosynthesis; 7,8-dihydroneopterin triphosphate biosynthesis; 7,8-dihydroneopterin triphosphate from GTP: step 1/1. In terms of biological role, converts GTP to 7,8-dihydroneopterin triphosphate. In Geobacter sulfurreducens (strain ATCC 51573 / DSM 12127 / PCA), this protein is GTP cyclohydrolase FolE2.